The following is a 123-amino-acid chain: Urotensin-2 (123 aa).

Positions 1–20 (MDRVPFCCLLFVGLLNPLLS) are cleaved as a signal peptide. Positions 21 to 104 (FPVTDTGEMS…TVLSRLLART (84 aa)) are excised as a propeptide. The segment at 63–91 (EAEGSLGQADPSAETPTPRGSLRKALTGQ) is disordered. C117 and C122 are disulfide-bonded.

It belongs to the urotensin-2 family. In terms of tissue distribution, brain specific.

It localises to the secreted. Functionally, highly potent vasoconstrictor. This is Urotensin-2 (Uts2) from Rattus norvegicus (Rat).